The chain runs to 231 residues: Ribose-5-phosphate isomerase A (231 aa).

Residues 32 to 35 (TGST), 85 to 88 (DGAD), and 98 to 101 (KGGG) each bind substrate. E107 functions as the Proton acceptor in the catalytic mechanism. Residue K125 coordinates substrate.

This sequence belongs to the ribose 5-phosphate isomerase family. Homodimer.

It catalyses the reaction aldehydo-D-ribose 5-phosphate = D-ribulose 5-phosphate. It participates in carbohydrate degradation; pentose phosphate pathway; D-ribose 5-phosphate from D-ribulose 5-phosphate (non-oxidative stage): step 1/1. Catalyzes the reversible conversion of ribose-5-phosphate to ribulose 5-phosphate. This chain is Ribose-5-phosphate isomerase A, found in Burkholderia cenocepacia (strain ATCC BAA-245 / DSM 16553 / LMG 16656 / NCTC 13227 / J2315 / CF5610) (Burkholderia cepacia (strain J2315)).